The sequence spans 279 residues: Putative colanic acid biosynthesis glycosyl transferase WcaA (279 aa).

This sequence to R.meliloti ExoO.

The protein operates within slime biogenesis; slime polysaccharide biosynthesis. The sequence is that of Putative colanic acid biosynthesis glycosyl transferase WcaA (wcaA) from Escherichia coli (strain K12).